The following is a 198-amino-acid chain: NAD(P)H dehydrogenase (quinone) (198 aa).

The Flavodoxin-like domain occupies 4–190 (VLVLYYSAYG…EGAKYQGAHV (187 aa)). FMN-binding positions include 10-15 (SAYGHI) and 78-80 (TRF). Y12 contributes to the NAD(+) binding site. W98 contributes to the substrate binding site. FMN is bound by residues 113 to 119 (SSATQHG) and H134.

The protein belongs to the WrbA family. It depends on FMN as a cofactor.

The catalysed reaction is a quinone + NADH + H(+) = a quinol + NAD(+). It carries out the reaction a quinone + NADPH + H(+) = a quinol + NADP(+). The sequence is that of NAD(P)H dehydrogenase (quinone) from Rhizobium johnstonii (strain DSM 114642 / LMG 32736 / 3841) (Rhizobium leguminosarum bv. viciae).